The following is a 471-amino-acid chain: Iroquois-class homeodomain protein IRX-2 (471 aa).

A DNA-binding region (homeobox; TALE-type) is located at residues 112–175 (LNDPAYRKNA…ANARRRLKKE (64 aa)). Disordered stretches follow at residues 176–373 (NKMT…SPYP) and 424–471 (APKA…QPYL). A Phosphoserine modification is found at Ser186. The segment covering 195-209 (DATRSKDESPDKAQE) has biased composition (basic and acidic residues). Acidic residues predominate over residues 261–273 (DDLEDDEDDDEEG). Residues 355-367 (PAAAAPASTGAPP) show a composition bias toward low complexity. Over residues 462–471 (VVGGGVQPYL) the composition is skewed to gly residues.

Belongs to the TALE/IRO homeobox family.

It is found in the nucleus. The sequence is that of Iroquois-class homeodomain protein IRX-2 (IRX2) from Homo sapiens (Human).